Here is a 340-residue protein sequence, read N- to C-terminus: Methionyl-tRNA formyltransferase (340 aa).

(6S)-5,6,7,8-tetrahydrofolate is bound at residue S110–P113.

Belongs to the Fmt family.

The enzyme catalyses L-methionyl-tRNA(fMet) + (6R)-10-formyltetrahydrofolate = N-formyl-L-methionyl-tRNA(fMet) + (6S)-5,6,7,8-tetrahydrofolate + H(+). Its function is as follows. Attaches a formyl group to the free amino group of methionyl-tRNA(fMet). The formyl group appears to play a dual role in the initiator identity of N-formylmethionyl-tRNA by promoting its recognition by IF2 and preventing the misappropriation of this tRNA by the elongation apparatus. The chain is Methionyl-tRNA formyltransferase from Synechococcus sp. (strain WH7803).